Here is a 239-residue protein sequence, read N- to C-terminus: THAP domain-containing protein 3 (239 aa).

The THAP-type zinc-finger motif lies at 1 to 82; it reads MPKSCAARQC…LKHNAVPTVF (82 aa). Disordered stretches follow at residues 88 to 125 and 139 to 174; these read PQLV…LGRK and VGGL…PTQP. An HCFC1-binding motif (HBM) motif is present at residues 176–179; it reads DHSY.

In terms of assembly, component of a THAP1/THAP3-HCFC1-OGT complex that contains at least, either THAP1 or THAP3, HCFC1 and OGT. Interacts directly with OGT and HCFC1 (via its HBM).

Component of a THAP1/THAP3-HCFC1-OGT complex that is required for the regulation of the transcriptional activity of RRM1. This chain is THAP domain-containing protein 3 (THAP3), found in Bos taurus (Bovine).